Here is a 535-residue protein sequence, read N- to C-terminus: Flavonoid 3'-monooxygenase CYP75B4 (535 aa).

Residues 8–28 (ISTSLLLTTVALSVIVCYALV) form a helical membrane-spanning segment. Residue Cys-469 participates in heme binding.

This sequence belongs to the cytochrome P450 family. Requires heme as cofactor.

The protein resides in the membrane. It catalyses the reaction a 3'-unsubstituted flavone + reduced [NADPH--hemoprotein reductase] + O2 = a 3'-hydroxyflavone + oxidized [NADPH--hemoprotein reductase] + H2O + H(+). It functions in the pathway secondary metabolite biosynthesis; flavonoid biosynthesis. Catalyzes the 3'-hydroxylation of the flavonoid B-ring to the 3',4'-hydroxylated state. Catalyzes in vitro 3'-hydroxylation of different flavonoids. Catalyzes the conversion of apigenin to luteolin, naringenin to eriodictyol, and kaempferol to quercetin. Possesses specific 5'-hydroxylase activity toward chrysoeriol (a 3'-methoxylated flavone) and is indispensable for tricin formation. Converts chrysoeriol to selgin, a precursor of tricin, suggesting that chrysoeriol, instead of tricetin, is an intermediate in tricin biosynthesis. This is Flavonoid 3'-monooxygenase CYP75B4 from Oryza sativa subsp. japonica (Rice).